We begin with the raw amino-acid sequence, 164 residues long: Peptidyl-prolyl cis-trans isomerase (164 aa).

One can recognise a PPIase cyclophilin-type domain in the interval 7–163; that stretch reads FFDLQANGEN…KKITIADCGQ (157 aa).

It belongs to the cyclophilin-type PPIase family. PPIase A subfamily.

It is found in the cytoplasm. It carries out the reaction [protein]-peptidylproline (omega=180) = [protein]-peptidylproline (omega=0). With respect to regulation, binds cyclosporin A (CsA). CsA mediates some of its effects via an inhibitory action on PPIase. Functionally, PPIases accelerate the folding of proteins. It catalyzes the cis-trans isomerization of proline imidic peptide bonds in oligopeptides. This is Peptidyl-prolyl cis-trans isomerase from Hemicentrotus pulcherrimus (Sea urchin).